Here is a 212-residue protein sequence, read N- to C-terminus: MGTNKPVVIGIAGGSGSGKTSVTKAIFDHFKGHSILILEQDYYYKDQSHLPMEERLKTNYDHPLAFDNDLLIEHLQQLLAYEQIDKPVYDYTLHTRSEEIIPVEPKDVIILEGILILEDPRLCELMDIKLFVDTDADLRILRRMQRDIKERGRTMDSVIDQYVNVVRPMHNQFIEPSKKFADIIIPEGGQNHVAIDIMVTKIATILEQKVNL.

13–20 (GGSGSGKT) provides a ligand contact to ATP.

The protein belongs to the uridine kinase family.

It localises to the cytoplasm. It carries out the reaction uridine + ATP = UMP + ADP + H(+). The catalysed reaction is cytidine + ATP = CMP + ADP + H(+). Its pathway is pyrimidine metabolism; CTP biosynthesis via salvage pathway; CTP from cytidine: step 1/3. The protein operates within pyrimidine metabolism; UMP biosynthesis via salvage pathway; UMP from uridine: step 1/1. This chain is Uridine kinase, found in Bacillus cereus (strain B4264).